The chain runs to 305 residues: Lipoyl synthase (305 aa).

Residues cysteine 41, cysteine 46, cysteine 52, cysteine 68, cysteine 72, cysteine 75, and serine 281 each contribute to the [4Fe-4S] cluster site. Positions 54-270 constitute a Radical SAM core domain; sequence GARRTATFMI…RKVAMDKGFK (217 aa). Positions 283-298 are enriched in basic and acidic residues; sequence HADEQVNEAAKEKQRQ. Positions 283 to 305 are disordered; that stretch reads HADEQVNEAAKEKQRQGEAQLNS.

It belongs to the radical SAM superfamily. Lipoyl synthase family. It depends on [4Fe-4S] cluster as a cofactor.

The protein resides in the cytoplasm. It catalyses the reaction [[Fe-S] cluster scaffold protein carrying a second [4Fe-4S](2+) cluster] + N(6)-octanoyl-L-lysyl-[protein] + 2 oxidized [2Fe-2S]-[ferredoxin] + 2 S-adenosyl-L-methionine + 4 H(+) = [[Fe-S] cluster scaffold protein] + N(6)-[(R)-dihydrolipoyl]-L-lysyl-[protein] + 4 Fe(3+) + 2 hydrogen sulfide + 2 5'-deoxyadenosine + 2 L-methionine + 2 reduced [2Fe-2S]-[ferredoxin]. The protein operates within protein modification; protein lipoylation via endogenous pathway; protein N(6)-(lipoyl)lysine from octanoyl-[acyl-carrier-protein]. Its function is as follows. Catalyzes the radical-mediated insertion of two sulfur atoms into the C-6 and C-8 positions of the octanoyl moiety bound to the lipoyl domains of lipoate-dependent enzymes, thereby converting the octanoylated domains into lipoylated derivatives. This Staphylococcus aureus (strain Mu3 / ATCC 700698) protein is Lipoyl synthase.